Reading from the N-terminus, the 465-residue chain is MAP kinase-interacting serine/threonine-protein kinase 1 (465 aa).

Residues 1 to 11 (MVSSQKLEKPI) show a composition bias toward basic and acidic residues. The segment at 1-40 (MVSSQKLEKPIEMGSSEPLPIADGDRRRKKKRRGRATDSL) is disordered. S39 bears the Phosphoserine mark. One can recognise a Protein kinase domain in the interval 49–374 (KLTSELLGEG…AAQVLQHPWV (326 aa)). ATP contacts are provided by residues 55 to 63 (LGEGAYAKV) and K78. Positions 185–203 (APTSLGSSDPPTSASQVAG) are enriched in polar residues. The interval 185 to 204 (APTSLGSSDPPTSASQVAGT) is disordered. The Proton acceptor role is filled by D211. A phosphoserine mark is found at S221 and S226. Residues T250, T255, and T385 each carry the phosphothreonine modification. A disordered region spans residues 446 to 465 (RRRALAQAGRGEDRSPPTAL). Residues 455–465 (RGEDRSPPTAL) are compositionally biased toward basic and acidic residues. Phosphoserine is present on S460.

Belongs to the protein kinase superfamily. CAMK Ser/Thr protein kinase family. As to quaternary structure, interacts with the C-terminal regions of EIF4G1 and EIF4G2. Also binds to dephosphorylated ERK1 and ERK2, and to the p38 kinases. Requires Mg(2+) as cofactor. In terms of processing, dual phosphorylation of Thr-250 and Thr-255 activates the kinase. Phosphorylation of Thr-385 activates the kinase. MAPK3/ERK1 is one of the kinases which activate MKNK1/MNK1. Phosphorylation by PAK2 leads to a reduced phosphorylation of EIF4G1. Ubiquitous.

It is found in the cytoplasm. The protein resides in the nucleus. It carries out the reaction L-seryl-[protein] + ATP = O-phospho-L-seryl-[protein] + ADP + H(+). The enzyme catalyses L-threonyl-[protein] + ATP = O-phospho-L-threonyl-[protein] + ADP + H(+). With respect to regulation, phosphorylated and activated by the p38 kinases and kinases in the Erk pathway. May play a role in the response to environmental stress and cytokines. Appears to regulate translation by phosphorylating EIF4E, thus increasing the affinity of this protein for the 7-methylguanosine-containing mRNA cap. The chain is MAP kinase-interacting serine/threonine-protein kinase 1 (MKNK1) from Homo sapiens (Human).